The following is a 529-amino-acid chain: Bifunctional purine biosynthesis protein PurH (529 aa).

An MGS-like domain is found at 1–148; sequence MQPPRPVRRA…KNHKDVAIVV (148 aa).

This sequence belongs to the PurH family.

The enzyme catalyses (6R)-10-formyltetrahydrofolate + 5-amino-1-(5-phospho-beta-D-ribosyl)imidazole-4-carboxamide = 5-formamido-1-(5-phospho-D-ribosyl)imidazole-4-carboxamide + (6S)-5,6,7,8-tetrahydrofolate. It catalyses the reaction IMP + H2O = 5-formamido-1-(5-phospho-D-ribosyl)imidazole-4-carboxamide. The protein operates within purine metabolism; IMP biosynthesis via de novo pathway; 5-formamido-1-(5-phospho-D-ribosyl)imidazole-4-carboxamide from 5-amino-1-(5-phospho-D-ribosyl)imidazole-4-carboxamide (10-formyl THF route): step 1/1. It functions in the pathway purine metabolism; IMP biosynthesis via de novo pathway; IMP from 5-formamido-1-(5-phospho-D-ribosyl)imidazole-4-carboxamide: step 1/1. This Sodalis glossinidius (strain morsitans) protein is Bifunctional purine biosynthesis protein PurH.